The primary structure comprises 573 residues: Proline--tRNA ligase (573 aa).

It belongs to the class-II aminoacyl-tRNA synthetase family. ProS type 1 subfamily. In terms of assembly, homodimer.

It is found in the cytoplasm. It carries out the reaction tRNA(Pro) + L-proline + ATP = L-prolyl-tRNA(Pro) + AMP + diphosphate. Catalyzes the attachment of proline to tRNA(Pro) in a two-step reaction: proline is first activated by ATP to form Pro-AMP and then transferred to the acceptor end of tRNA(Pro). As ProRS can inadvertently accommodate and process non-cognate amino acids such as alanine and cysteine, to avoid such errors it has two additional distinct editing activities against alanine. One activity is designated as 'pretransfer' editing and involves the tRNA(Pro)-independent hydrolysis of activated Ala-AMP. The other activity is designated 'posttransfer' editing and involves deacylation of mischarged Ala-tRNA(Pro). The misacylated Cys-tRNA(Pro) is not edited by ProRS. The sequence is that of Proline--tRNA ligase from Citrifermentans bemidjiense (strain ATCC BAA-1014 / DSM 16622 / JCM 12645 / Bem) (Geobacter bemidjiensis).